The following is a 306-amino-acid chain: Pantothenate kinase (306 aa).

Residue Gly-91–Ser-98 coordinates ATP.

Belongs to the prokaryotic pantothenate kinase family.

The protein resides in the cytoplasm. It catalyses the reaction (R)-pantothenate + ATP = (R)-4'-phosphopantothenate + ADP + H(+). It participates in cofactor biosynthesis; coenzyme A biosynthesis; CoA from (R)-pantothenate: step 1/5. This chain is Pantothenate kinase (coaA), found in Streptococcus pyogenes serotype M3 (strain ATCC BAA-595 / MGAS315).